Consider the following 371-residue polypeptide: MASVTLGSWIVVHHHNHHHPSSILTKSRSRSCPITLTKPISFRSKRTVSSSSSIVSSSVVTKEDNLRQSEPSSFDFMSYIITKAELVNKALDSAVPLREPLKIHEAMRYSLLAGGKRVRPVLCIAACELVGGEESTAMPAACAVEMIHTMSLIHDDLPCMDNDDLRRGKPTNHKVFGEDVAVLAGDALLSFAFEHLASATSSDVVSPVRVVRAVGELAKAIGTEGLVAGQVVDISSEGLDLNDVGLEHLEFIHLHKTAALLEASAVLGAIVGGGSDDEIERLRKFARCIGLLFQVVDDILDVTKSSKELGKTAGKDLIADKLTYPKIMGLEKSREFAEKLNREARDQLLGFDSDKVAPLLALANYIAYRQN.

Residues 1 to 51 (MASVTLGSWIVVHHHNHHHPSSILTKSRSRSCPITLTKPISFRSKRTVSSS) constitute a chloroplast transit peptide. The residue at position 52 (Ser-52) is an N-acetylserine. Residues Lys-116, Arg-119, and His-148 each coordinate isopentenyl diphosphate. Residues Asp-155 and Asp-161 each coordinate Mg(2+). Arg-166 is a binding site for dimethylallyl diphosphate. Arg-167 contacts isopentenyl diphosphate. Residues Lys-256, Thr-257, Gln-294, Lys-311, and Lys-321 each contribute to the dimethylallyl diphosphate site.

Belongs to the FPP/GGPP synthase family. Forms homodimers. Part of a heterodimeric geranyl(geranyl)diphosphate synthase. Interacts with GGR. It depends on Mg(2+) as a cofactor. As to expression, expressed ubiquitously.

It localises to the plastid. The protein resides in the chloroplast. Its subcellular location is the cytoplasm. The enzyme catalyses isopentenyl diphosphate + dimethylallyl diphosphate = (2E)-geranyl diphosphate + diphosphate. It catalyses the reaction isopentenyl diphosphate + (2E)-geranyl diphosphate = (2E,6E)-farnesyl diphosphate + diphosphate. The catalysed reaction is isopentenyl diphosphate + (2E,6E)-farnesyl diphosphate = (2E,6E,10E)-geranylgeranyl diphosphate + diphosphate. It participates in isoprenoid biosynthesis; farnesyl diphosphate biosynthesis; farnesyl diphosphate from geranyl diphosphate and isopentenyl diphosphate: step 1/1. Its pathway is isoprenoid biosynthesis; geranyl diphosphate biosynthesis; geranyl diphosphate from dimethylallyl diphosphate and isopentenyl diphosphate: step 1/1. It functions in the pathway isoprenoid biosynthesis; geranylgeranyl diphosphate biosynthesis; geranylgeranyl diphosphate from farnesyl diphosphate and isopentenyl diphosphate: step 1/1. Heterodimeric geranyl(geranyl)-diphosphate (GPP) synthase large subunit. In vitro, the large subunit catalyzes mainly the trans-addition of the three molecules of IPP onto DMAPP to form geranylgeranyl pyrophosphate while the small subunit alone is inactive. Upon association of the two subunits, the product profile changes and the production of gerany-diphosphate is strongly increased. The sequence is that of Heterodimeric geranylgeranyl pyrophosphate synthase large subunit 1, chloroplastic (GGPPS1) from Arabidopsis thaliana (Mouse-ear cress).